The primary structure comprises 505 residues: Peroxisome proliferator-activated receptor gamma (505 aa).

A disordered region spans residues 1-26 (MGETLGDSLIDPESDSFADTLSASTS). A compositionally biased stretch (polar residues) spans 17 to 26 (FADTLSASTS). The residue at position 112 (Ser112) is a Phosphoserine; by MAPK. The nuclear receptor DNA-binding region spans 136 to 210 (AIECRVCGDK…VGMSHNAIRF (75 aa)). 2 NR C4-type zinc fingers span residues 139–159 (CRVC…CEGC) and 176–198 (CDLN…FQKC). Residues 205–280 (HNAIRFGRMP…DKSPFVIYDM (76 aa)) are interaction with FAM120B. Residues 238-503 (DLRALAKHLY…HPLLQEIYKD (266 aa)) enclose the NR LBD domain. Lys252 is covalently cross-linked (Glycyl lysine isopeptide (Lys-Gly) (interchain with G-Cter in ubiquitin)). The short motif at 495-503 (PLLQEIYKD) is the 9aaTAD element.

This sequence belongs to the nuclear hormone receptor family. NR1 subfamily. As to quaternary structure, interacts with FOXO1 (acetylated form). Heterodimer with other nuclear receptors, such as RXRA. The heterodimer with the retinoic acid receptor RXRA is called adipocyte-specific transcription factor ARF6. Interacts with NCOA6 coactivator, leading to a strong increase in transcription of target genes. Interacts with coactivator PPARBP, leading to a mild increase in transcription of target genes. Interacts with NOCA7 in a ligand-inducible manner. Interacts with NCOA1 and NCOA2 LXXLL motifs. Interacts with ASXL1, ASXL2, DNTTIP2, FAM120B, MAP2K1/MEK1, NR0B2, PDPK1, PRDM16, PRMT2 and TGFB1I1. Interacts (when activated by agonist) with PPP5C. Interacts with HELZ2 and THRAP3; the interaction stimulates the transcriptional activity of PPARG. Interacts with PER2, the interaction is ligand dependent and blocks PPARG recruitment to target promoters. Interacts with NOCT. Interacts with ACTN4. Interacts (when in the liganded conformation) with GPS2. Interacts with CRY1 and CRY2 in a ligand-dependent manner. In the absence of hormonal ligand, interacts with TACC1. In macrophages, interacts with PAQR3 and STUB1; the interactions promote PPARG poylubiquitination and STUB1-mediated degradation. Phosphorylated at basal conditions and dephosphorylated when treated with the ligand. May be dephosphorylated by PPP5C. The phosphorylated form may be inactive and dephosphorylation induces adipogenic activity. In terms of processing, ubiquitinated by E3 ubiquitin-protein ligase complex containing FBXO9; leading to proteasomal degradation. Ubiquitinated at Lys-252 by TRIM55 leading to proteasomal degradation. Ubiquitinated by E3 ubiquitin-protein ligase STUB1/CHIP; leading to proteasomal degradation.

It is found in the nucleus. The protein resides in the cytoplasm. PDPK1 activates its transcriptional activity independently of its kinase activity. In terms of biological role, nuclear receptor that binds peroxisome proliferators such as hypolipidemic drugs and fatty acids. Once activated by a ligand, the nuclear receptor binds to DNA specific PPAR response elements (PPRE) and modulates the transcription of its target genes, such as acyl-CoA oxidase. It therefore controls the peroxisomal beta-oxidation pathway of fatty acids. Key regulator of adipocyte differentiation and glucose homeostasis. ARF6 acts as a key regulator of the tissue-specific adipocyte P2 (aP2) enhancer. Acts as a critical regulator of gut homeostasis by suppressing NF-kappa-B-mediated pro-inflammatory responses. Plays a role in the regulation of cardiovascular circadian rhythms by regulating the transcription of BMAL1 in the blood vessels. This chain is Peroxisome proliferator-activated receptor gamma (PPARG), found in Canis lupus familiaris (Dog).